The sequence spans 76 residues: UPF0270 protein PSPA7_1664 (76 aa).

Belongs to the UPF0270 family.

The polypeptide is UPF0270 protein PSPA7_1664 (Pseudomonas paraeruginosa (strain DSM 24068 / PA7) (Pseudomonas aeruginosa (strain PA7))).